Reading from the N-terminus, the 199-residue chain is Nucleoid occlusion factor SlmA (199 aa).

One can recognise an HTH tetR-type domain in the interval 11–71; the sequence is ERRQQVLTVL…ALIDNLEAHL (61 aa). Positions 34 to 53 form a DNA-binding region, H-T-H motif; that stretch reads TTARIAAEVGVSEAALYRYY.

Belongs to the nucleoid occlusion factor SlmA family. In terms of assembly, homodimer. Interacts with FtsZ.

Its subcellular location is the cytoplasm. The protein localises to the nucleoid. Its function is as follows. Required for nucleoid occlusion (NO) phenomenon, which prevents Z-ring formation and cell division over the nucleoid. Acts as a DNA-associated cell division inhibitor that binds simultaneously chromosomal DNA and FtsZ, and disrupts the assembly of FtsZ polymers. SlmA-DNA-binding sequences (SBS) are dispersed on non-Ter regions of the chromosome, preventing FtsZ polymerization at these regions. This is Nucleoid occlusion factor SlmA from Pasteurella multocida (strain Pm70).